A 120-amino-acid polypeptide reads, in one-letter code: Ribonuclease P protein component (120 aa).

The protein belongs to the RnpA family. As to quaternary structure, consists of a catalytic RNA component (M1 or rnpB) and a protein subunit.

The enzyme catalyses Endonucleolytic cleavage of RNA, removing 5'-extranucleotides from tRNA precursor.. In terms of biological role, RNaseP catalyzes the removal of the 5'-leader sequence from pre-tRNA to produce the mature 5'-terminus. It can also cleave other RNA substrates such as 4.5S RNA. The protein component plays an auxiliary but essential role in vivo by binding to the 5'-leader sequence and broadening the substrate specificity of the ribozyme. This chain is Ribonuclease P protein component, found in Dictyoglomus thermophilum (strain ATCC 35947 / DSM 3960 / H-6-12).